A 101-amino-acid polypeptide reads, in one-letter code: Protein PIP-1 (101 aa).

An N-terminal signal peptide occupies residues 1 to 23; the sequence is MGKCLLLPLLLVVLSSLLGFPQA. The UPAR/Ly6 domain occupies 24-101; that stretch reads LECFQCQRVS…CHDSPFCNKF (78 aa). 5 disulfide bridges follow: cysteine 26/cysteine 53, cysteine 29/cysteine 38, cysteine 45/cysteine 71, cysteine 75/cysteine 91, and cysteine 92/cysteine 98. N-linked (GlcNAc...) asparagine glycosylation occurs at asparagine 84.

The protein resides in the secreted. The chain is Protein PIP-1 from Sus scrofa (Pig).